A 257-amino-acid chain; its full sequence is Flavin-dependent thymidylate synthase (257 aa).

One can recognise a ThyX domain in the interval 1-202 (MNVKLVSYTR…PRLFRYVGPN (202 aa)). FAD is bound by residues serine 55, 79–81 (RHR), and glutamine 87. Residues 76–79 (QLVR), 87–91 (QMSHR), and arginine 141 contribute to the dUMP site. The ThyX motif motif lies at 79–89 (RHRVASYTQMS). FAD contacts are provided by residues 157–159 (NAR) and asparagine 163. Residue arginine 168 coordinates dUMP. Arginine 168 serves as the catalytic Involved in ionization of N3 of dUMP, leading to its activation.

It belongs to the thymidylate synthase ThyX family. Homotetramer. Requires FAD as cofactor.

The catalysed reaction is dUMP + (6R)-5,10-methylene-5,6,7,8-tetrahydrofolate + NADPH + H(+) = dTMP + (6S)-5,6,7,8-tetrahydrofolate + NADP(+). It participates in pyrimidine metabolism; dTTP biosynthesis. Its function is as follows. Catalyzes the reductive methylation of 2'-deoxyuridine-5'-monophosphate (dUMP) to 2'-deoxythymidine-5'-monophosphate (dTMP) while utilizing 5,10-methylenetetrahydrofolate (mTHF) as the methyl donor, and NADPH and FADH(2) as the reductant. This Sulfurisphaera tokodaii (strain DSM 16993 / JCM 10545 / NBRC 100140 / 7) (Sulfolobus tokodaii) protein is Flavin-dependent thymidylate synthase.